The primary structure comprises 241 residues: Pyridoxine/pyridoxamine 5'-phosphate oxidase (241 aa).

A disordered region spans residues 1 to 35 (MASNPPSAASPRRTAVSPGADRPDGPDPAGQRQSY). Residues 32–35 (RQSY) and lysine 92 contribute to the substrate site. FMN is bound by residues 87-92 (RTVLLK), 102-103 (YT), arginine 108, lysine 109, and glutamine 131. Residues tyrosine 149, arginine 153, and serine 157 each coordinate substrate. FMN is bound by residues 166–167 (QS) and tryptophan 212. Residue 218–220 (RLH) participates in substrate binding. Arginine 222 provides a ligand contact to FMN.

This sequence belongs to the pyridoxamine 5'-phosphate oxidase family. In terms of assembly, homodimer. The cofactor is FMN.

The catalysed reaction is pyridoxamine 5'-phosphate + O2 + H2O = pyridoxal 5'-phosphate + H2O2 + NH4(+). It carries out the reaction pyridoxine 5'-phosphate + O2 = pyridoxal 5'-phosphate + H2O2. The protein operates within cofactor metabolism; pyridoxal 5'-phosphate salvage; pyridoxal 5'-phosphate from pyridoxamine 5'-phosphate: step 1/1. It functions in the pathway cofactor metabolism; pyridoxal 5'-phosphate salvage; pyridoxal 5'-phosphate from pyridoxine 5'-phosphate: step 1/1. In terms of biological role, catalyzes the oxidation of either pyridoxine 5'-phosphate (PNP) or pyridoxamine 5'-phosphate (PMP) into pyridoxal 5'-phosphate (PLP). This Frankia alni (strain DSM 45986 / CECT 9034 / ACN14a) protein is Pyridoxine/pyridoxamine 5'-phosphate oxidase.